The following is a 64-amino-acid chain: Large ribosomal subunit protein bL35 (64 aa).

The span at 1-28 shows a compositional bias: basic residues; it reads MPKMKTKSGAAKRFKKTAGGLKHKHAFK. Positions 1–64 are disordered; the sequence is MPKMKTKSGA…ARVERSLRLR (64 aa). The span at 53 to 64 shows a compositional bias: basic and acidic residues; the sequence is DVARVERSLRLR.

The protein belongs to the bacterial ribosomal protein bL35 family.

The chain is Large ribosomal subunit protein bL35 from Pseudomonas aeruginosa (strain LESB58).